Consider the following 35-residue polypeptide: Coenzyme PQQ synthesis protein A (35 aa).

The segment at residues 16–20 (EINMY) is a cross-link (pyrroloquinoline quinone (Glu-Tyr)).

Belongs to the PqqA family.

It functions in the pathway cofactor biosynthesis; pyrroloquinoline quinone biosynthesis. In terms of biological role, required for coenzyme pyrroloquinoline quinone (PQQ) biosynthesis. PQQ is probably formed by cross-linking a specific glutamate to a specific tyrosine residue and excising these residues from the peptide. The polypeptide is Coenzyme PQQ synthesis protein A (Roseobacter denitrificans (strain ATCC 33942 / OCh 114) (Erythrobacter sp. (strain OCh 114))).